Here is a 223-residue protein sequence, read N- to C-terminus: MIFGKIDYINLLPLHIYLKKYPLPNGYKANMEYKKGVPSKLNKDLFYRRIDAAIISSIESARKKYKNLDLGICANKRVLSVLVEKNTSNAKDPSSATSNALAKVLKQDGKVIIGDKALKLYLKDPSKYIDLCAKWHEKTGLPFVFARFSCVQKKALYKQILKKFPKTKIKIPYYILQNYAKTRDLDIKDVRYYLDEVIYHKISTKEKTALKRFVKACKALNLA.

Belongs to the MqnA/MqnD family. MqnA subfamily.

The catalysed reaction is chorismate = 3-[(1-carboxyvinyl)-oxy]benzoate + H2O. Its pathway is quinol/quinone metabolism; menaquinone biosynthesis. In terms of biological role, catalyzes the dehydration of chorismate into 3-[(1-carboxyvinyl)oxy]benzoate, a step in the biosynthesis of menaquinone (MK, vitamin K2). The sequence is that of Chorismate dehydratase from Campylobacter jejuni subsp. jejuni serotype O:23/36 (strain 81-176).